The chain runs to 1097 residues: DNA-directed RNA polymerase subunit beta (1097 aa).

The interval 1072–1097 (QDINPRRNTPSRPTYESLGTSEYEED) is disordered. Over residues 1077-1091 (RRNTPSRPTYESLGT) the composition is skewed to polar residues.

This sequence belongs to the RNA polymerase beta chain family. In terms of assembly, in cyanobacteria the RNAP catalytic core is composed of 2 alpha, 1 beta, 1 beta', 1 gamma and 1 omega subunit. When a sigma factor is associated with the core the holoenzyme is formed, which can initiate transcription.

It catalyses the reaction RNA(n) + a ribonucleoside 5'-triphosphate = RNA(n+1) + diphosphate. DNA-dependent RNA polymerase catalyzes the transcription of DNA into RNA using the four ribonucleoside triphosphates as substrates. The polypeptide is DNA-directed RNA polymerase subunit beta (Prochlorococcus marinus (strain MIT 9215)).